The sequence spans 102 residues: Crustacean hyperglycemic hormones 3 (102 aa).

An N-terminal signal peptide occupies residues 1–22 (MIALRLIAVTLVVAMAASTTWA). Intrachain disulfides connect cysteine 35-cysteine 71, cysteine 51-cysteine 67, and cysteine 54-cysteine 80. Valine 100 is modified (valine amide).

This sequence belongs to the arthropod CHH/MIH/GIH/VIH hormone family.

Its subcellular location is the secreted. In terms of biological role, hormone found in the sinus gland of isopods and decapods which controls the blood sugar level. Has a secretagogue action over the amylase released from the midgut gland. May act as a stress hormone and may be involved in the control of molting and reproduction. The sequence is that of Crustacean hyperglycemic hormones 3 (CHH3) from Penaeus monodon (Giant tiger prawn).